The primary structure comprises 149 residues: NADH-ubiquinone oxidoreductase chain 6 (149 aa).

Transmembrane regions (helical) follow at residues 23–43, 51–71, 83–103, and 114–134; these read ILML…FYFI, MMMI…MISL, LSVT…MTKL, and VNFV…LTII.

Belongs to the complex I subunit 6 family.

It is found in the mitochondrion membrane. It carries out the reaction a ubiquinone + NADH + 5 H(+)(in) = a ubiquinol + NAD(+) + 4 H(+)(out). Core subunit of the mitochondrial membrane respiratory chain NADH dehydrogenase (Complex I) that is believed to belong to the minimal assembly required for catalysis. Complex I functions in the transfer of electrons from NADH to the respiratory chain. The immediate electron acceptor for the enzyme is believed to be ubiquinone. The sequence is that of NADH-ubiquinone oxidoreductase chain 6 (ND6) from Rhipicephalus sanguineus (Brown dog tick).